The chain runs to 358 residues: Transmembrane protein 144 homolog B (358 aa).

The next 10 helical transmembrane spans lie at 6 to 26, 35 to 55, 60 to 79, 86 to 108, 122 to 142, 211 to 231, 244 to 264, 279 to 299, 307 to 327, and 337 to 357; these read VIGY…YVPV, LAFT…AMFI, IFDP…NFCV, IGIG…FTGK, PALN…FFFI, ILGI…MVPM, LSFV…VFIV, IFPS…LMVA, IGFP…SVFY, and LLIL…LALS.

It belongs to the TMEM144 family.

The protein resides in the membrane. The protein is Transmembrane protein 144 homolog B (tmem144B) of Dictyostelium discoideum (Social amoeba).